The chain runs to 464 residues: Na(+)/H(+) antiporter NhaA (464 aa).

12 helical membrane-spanning segments follow: residues 37–57, 82–102, 118–138, 145–165, 176–196, 200–220, 226–246, 248–268, 321–341, 360–380, 396–416, and 430–450; these read GSGI…NTSC, IHYW…GLEI, VLPI…YFSF, VSGW…ILLL, AVLV…IAIF, NLAW…LLLN, ALWA…FSGV, ATVA…YSPT, ILNT…NAGV, VFFG…MICV, VLGI…VSEL, and ITIL…LRFI.

The protein belongs to the NhaA Na(+)/H(+) (TC 2.A.33) antiporter family.

It is found in the cell inner membrane. The enzyme catalyses Na(+)(in) + 2 H(+)(out) = Na(+)(out) + 2 H(+)(in). Its function is as follows. Na(+)/H(+) antiporter that extrudes sodium in exchange for external protons. This chain is Na(+)/H(+) antiporter NhaA, found in Dichelobacter nodosus (strain VCS1703A).